A 37-amino-acid chain; its full sequence is Large ribosomal subunit protein bL36 (37 aa).

It belongs to the bacterial ribosomal protein bL36 family.

The sequence is that of Large ribosomal subunit protein bL36 from Janthinobacterium sp. (strain Marseille) (Minibacterium massiliensis).